The sequence spans 271 residues: GPN-loop GTPase 3 (271 aa).

13–18 contacts GTP; that stretch reads GVGKST. Residues 70 to 72 carry the Gly-Pro-Asn (GPN)-loop; involved in dimer interface motif; it reads GPN. 173–176 provides a ligand contact to GTP; it reads SKMD.

Belongs to the GPN-loop GTPase family. As to quaternary structure, heterodimers with GPN1 or GPN2. Binds to RNA polymerase II (RNAPII).

Its function is as follows. Small GTPase required for proper nuclear import of RNA polymerase II and III (RNAPII and RNAPIII). May act at an RNAP assembly step prior to nuclear import. The sequence is that of GPN-loop GTPase 3 from Yarrowia lipolytica (strain CLIB 122 / E 150) (Yeast).